A 361-amino-acid polypeptide reads, in one-letter code: UDP-3-O-acylglucosamine N-acyltransferase (361 aa).

The active-site Proton acceptor is the histidine 253.

Belongs to the transferase hexapeptide repeat family. LpxD subfamily. In terms of assembly, homotrimer.

The catalysed reaction is a UDP-3-O-[(3R)-3-hydroxyacyl]-alpha-D-glucosamine + a (3R)-hydroxyacyl-[ACP] = a UDP-2-N,3-O-bis[(3R)-3-hydroxyacyl]-alpha-D-glucosamine + holo-[ACP] + H(+). Its pathway is bacterial outer membrane biogenesis; LPS lipid A biosynthesis. In terms of biological role, catalyzes the N-acylation of UDP-3-O-acylglucosamine using 3-hydroxyacyl-ACP as the acyl donor. Is involved in the biosynthesis of lipid A, a phosphorylated glycolipid that anchors the lipopolysaccharide to the outer membrane of the cell. The protein is UDP-3-O-acylglucosamine N-acyltransferase of Burkholderia pseudomallei (strain 668).